A 235-amino-acid chain; its full sequence is Uridylate kinase (235 aa).

9–12 serves as a coordination point for ATP; sequence KLSG. Gly-51 provides a ligand contact to UMP. ATP is bound by residues Gly-52 and Arg-56. UMP is bound by residues Asp-71 and 132-139; that span reads TGNPYFTT. Positions 159, 165, and 168 each coordinate ATP.

This sequence belongs to the UMP kinase family. As to quaternary structure, homohexamer.

The protein resides in the cytoplasm. The catalysed reaction is UMP + ATP = UDP + ADP. The protein operates within pyrimidine metabolism; CTP biosynthesis via de novo pathway; UDP from UMP (UMPK route): step 1/1. With respect to regulation, inhibited by UTP. In terms of biological role, catalyzes the reversible phosphorylation of UMP to UDP. The chain is Uridylate kinase from Cytophaga hutchinsonii (strain ATCC 33406 / DSM 1761 / CIP 103989 / NBRC 15051 / NCIMB 9469 / D465).